Consider the following 142-residue polypeptide: MKTFSAKARDVKRDWLLIDADGKTLGRLATKIASCLRGKHKPEYTPHTDIGDYIVVINASKIKVTGNKFEDKIYYHHTGYVGNLKSIAFKDLQTKNPETIINKAVKGMLPKGPLGRDMFKKMKVFVDSEHTHGAQQPKVLDI.

This sequence belongs to the universal ribosomal protein uL13 family. Part of the 50S ribosomal subunit.

Functionally, this protein is one of the early assembly proteins of the 50S ribosomal subunit, although it is not seen to bind rRNA by itself. It is important during the early stages of 50S assembly. This Vesicomyosocius okutanii subsp. Calyptogena okutanii (strain HA) protein is Large ribosomal subunit protein uL13.